The following is a 49-amino-acid chain: uncharacterized protein (49 aa).

The signal sequence occupies residues 1-22; the sequence is MVFLLFLSFVLSSIFLVPLVYM.

It localises to the secreted. This is an uncharacterized protein from Dictyostelium discoideum (Social amoeba).